A 184-amino-acid polypeptide reads, in one-letter code: UPF0340 protein TTE0860 (184 aa).

The protein belongs to the UPF0340 family.

The sequence is that of UPF0340 protein TTE0860 from Caldanaerobacter subterraneus subsp. tengcongensis (strain DSM 15242 / JCM 11007 / NBRC 100824 / MB4) (Thermoanaerobacter tengcongensis).